Here is a 773-residue protein sequence, read N- to C-terminus: Polyribonucleotide nucleotidyltransferase (773 aa).

Asp-490 and Asp-496 together coordinate Mg(2+). In terms of domain architecture, KH spans 557–616 (PKIDTITIPVDKIKVVIGKGGEQIDKIIAETGVKIDIDDEGLCSIFSSDQAAIDRAKEII). The S1 motif domain occupies 626–694 (GEIYDAKVVR…DKGRVDASMR (69 aa)). Basic and acidic residues predominate over residues 700-721 (PEGYVEPERKPRERRENGDRRK). The disordered stretch occupies residues 700 to 773 (PEGYVEPERK…FPELSTKKPE (74 aa)). The segment covering 739–748 (RNNQGNKVGN) has biased composition (low complexity). The span at 751 to 773 (FELRERKSHIDEEFPELSTKKPE) shows a compositional bias: basic and acidic residues.

The protein belongs to the polyribonucleotide nucleotidyltransferase family. Requires Mg(2+) as cofactor.

The protein resides in the cytoplasm. It carries out the reaction RNA(n+1) + phosphate = RNA(n) + a ribonucleoside 5'-diphosphate. Its function is as follows. Involved in mRNA degradation. Catalyzes the phosphorolysis of single-stranded polyribonucleotides processively in the 3'- to 5'-direction. In Lactococcus lactis subsp. lactis (strain IL1403) (Streptococcus lactis), this protein is Polyribonucleotide nucleotidyltransferase.